The sequence spans 198 residues: Transcription factor IND (198 aa).

The segment at 1–33 is disordered; the sequence is MENGMYKKKGVCDSCVSSKSRSNHSPKRSMMEP. The bHLH domain maps to 118–167; sequence ISDDPQTVVARRRRERISEKIRILKRIVPGGAKMDTASMLDEAIRYTKFL.

Homodimer. Heterodimer; possibly with ALC. After fertilization, it is expressed in stripes about four cells wide at the margins of developing wild-type fruit. Also expressed in the inner valve layer, which becomes lignified later in fruit development. Detected in roots.

The protein localises to the nucleus. In terms of biological role, transcription regulator required for seed dispersal. Involved in the differentiation of all three cell types required for fruit dehiscence. Acts as the key regulator in a network including SHP and ALC that controls specification of the valve margin. Works with ALC, SHP, and FUL to allow differentiation of the lignified valve layer, the spring-loaded mechanism of fruit that promotes opening. Regulates the expression of the YJ80 marker. This Arabidopsis thaliana (Mouse-ear cress) protein is Transcription factor IND (IND).